A 907-amino-acid chain; its full sequence is Nuclear receptor coactivator 7 (907 aa).

The span at 1 to 12 shows a compositional bias: basic and acidic residues; that stretch reads METKEEKKERRQ. A coiled-coil region spans residues 1-29; the sequence is METKEEKKERRQGYFARLKKKRQAKQNTE. Disordered regions lie at residues 1-51, 63-83, and 99-121; these read METK…DDES, DNCKFAGEKETVPEKEKRKKK, and YSTDDNQNKTNEKKEKKMVSQKP. Polar residues predominate over residues 25–41; it reads KQNTETVSANSPGSPVS. Composition is skewed to basic and acidic residues over residues 68 to 78 and 99 to 116; these read AGEKETVPEKE and YSTDDNQNKTNEKKEKKM. Residues 125–168 enclose the LysM domain; sequence IEYTAGNQDTINSIALKFNITPNKLVELNKLFTHTIVPGQILFV. 2 disordered regions span residues 335-373 and 401-443; these read LSKEKRQQNGDSPNVPGAKQINPSDKEKSADFEVLQSSE and DPHV…MDRG. Basic and acidic residues predominate over residues 401–422; the sequence is DPHVKEPSEEKNVSDIRTKEDS. A TLDc domain is found at 746–907; that stretch reads ALLENMHIEQ…IQDVEVWTFE (162 aa).

It belongs to the OXR1 family.

It is found in the nucleus. Enhances the transcriptional activities of several nuclear receptors. This Gallus gallus (Chicken) protein is Nuclear receptor coactivator 7 (NCOA7).